The primary structure comprises 547 residues: Chaperonin GroEL (547 aa).

Residues 30 to 33 (TLGP), lysine 51, 87 to 91 (DGTTT), glycine 415, 479 to 481 (NAA), and aspartate 495 each bind ATP.

This sequence belongs to the chaperonin (HSP60) family. In terms of assembly, forms a cylinder of 14 subunits composed of two heptameric rings stacked back-to-back. Interacts with the co-chaperonin GroES.

It localises to the cytoplasm. The catalysed reaction is ATP + H2O + a folded polypeptide = ADP + phosphate + an unfolded polypeptide.. Together with its co-chaperonin GroES, plays an essential role in assisting protein folding. The GroEL-GroES system forms a nano-cage that allows encapsulation of the non-native substrate proteins and provides a physical environment optimized to promote and accelerate protein folding. The protein is Chaperonin GroEL of Pseudomonas syringae pv. syringae (strain B728a).